A 1041-amino-acid chain; its full sequence is Integrator complex subunit 3 (1041 aa).

Position 1 is an N-acetylmethionine (Met-1). Phosphoserine occurs at positions 500, 535, and 993. The tract at residues 975-1041 (YEDSSTKPPK…GSSAVGSDSD (67 aa)) is disordered. Over residues 1006–1020 (AEEESGSSSASEEED) the composition is skewed to acidic residues.

The protein belongs to the Integrator subunit 3 family. As to quaternary structure, component of the Integrator complex, composed of core subunits INTS1, INTS2, INTS3, INTS4, INTS5, INTS6, INTS7, INTS8, INTS9/RC74, INTS10, INTS11/CPSF3L, INTS12, INTS13, INTS14 and INTS15. The core complex associates with protein phosphatase 2A subunits PPP2CA and PPP2R1A, to form the Integrator-PP2A (INTAC) complex. Component of the SOSS complex, composed of SOSS-B (SOSS-B1/NABP2 or SOSS-B2/NABP1), SOSS-A/INTS3 and SOSS-C/INIP. SOSS complexes containing SOSS-B1/NABP2 are more abundant than complexes containing SOSS-B2/NABP1. Interacts with SOSS-B1/NABP2, SOSS-B2/NABP1 and SOSS-C/INIP; the interaction is direct. Interacts with NBN/NBS1.

Its subcellular location is the nucleus. It localises to the cytoplasm. Functionally, component of the integrator complex, a multiprotein complex that terminates RNA polymerase II (Pol II) transcription in the promoter-proximal region of genes. The integrator complex provides a quality checkpoint during transcription elongation by driving premature transcription termination of transcripts that are unfavorably configured for transcriptional elongation: the complex terminates transcription by (1) catalyzing dephosphorylation of the C-terminal domain (CTD) of Pol II subunit POLR2A/RPB1 and SUPT5H/SPT5, (2) degrading the exiting nascent RNA transcript via endonuclease activity and (3) promoting the release of Pol II from bound DNA. The integrator complex is also involved in terminating the synthesis of non-coding Pol II transcripts, such as enhancer RNAs (eRNAs), small nuclear RNAs (snRNAs), telomerase RNAs and long non-coding RNAs (lncRNAs). Within the integrator complex, INTS3 is involved in the post-termination step: INTS3 binds INTS7 in the open conformation of integrator complex and prevents the rebinding of Pol II to the integrator after termination cycle. Mediates recruitment of cytoplasmic dynein to the nuclear envelope, probably as component of the integrator complex. Its function is as follows. Component of the SOSS complex, a multiprotein complex that functions downstream of the MRN complex to promote DNA repair and G2/M checkpoint. The SOSS complex associates with single-stranded DNA at DNA lesions and influences diverse endpoints in the cellular DNA damage response including cell-cycle checkpoint activation, recombinational repair and maintenance of genomic stability. The SOSS complex is required for efficient homologous recombination-dependent repair of double-strand breaks (DSBs) and ATM-dependent signaling pathways. In the SOSS complex, it is required for the assembly of the complex and for stabilization of the complex at DNA damage sites. This is Integrator complex subunit 3 (Ints3) from Mus musculus (Mouse).